Here is a 132-residue protein sequence, read N- to C-terminus: UPF0102 protein Ajs_0414 (132 aa).

Residues 1–23 (MGFLGKKVNGSAPARTTRAAGQA) form a disordered region.

The protein belongs to the UPF0102 family.

In Acidovorax sp. (strain JS42), this protein is UPF0102 protein Ajs_0414.